The sequence spans 264 residues: Probable mobile endonuclease B (264 aa).

Residues 25 to 50 enclose the HNH domain; it reads TYYTETHHIIPRCMGGTDDKTNLVLL.

This sequence to phage T4 mobC and mobD.

This chain is Probable mobile endonuclease B (mobB), found in Escherichia coli (Bacteriophage T4).